Here is a 102-residue protein sequence, read N- to C-terminus: Urease subunit beta (102 aa).

Belongs to the urease beta subunit family. Heterotrimer of UreA (gamma), UreB (beta) and UreC (alpha) subunits. Three heterotrimers associate to form the active enzyme.

It is found in the cytoplasm. It catalyses the reaction urea + 2 H2O + H(+) = hydrogencarbonate + 2 NH4(+). It functions in the pathway nitrogen metabolism; urea degradation; CO(2) and NH(3) from urea (urease route): step 1/1. The polypeptide is Urease subunit beta (Pseudomonas syringae pv. tomato (strain ATCC BAA-871 / DC3000)).